The chain runs to 179 residues: Large ribosomal subunit protein uL5 (179 aa).

Belongs to the universal ribosomal protein uL5 family. As to quaternary structure, part of the 50S ribosomal subunit; part of the 5S rRNA/L5/L18/L25 subcomplex. Contacts the 5S rRNA and the P site tRNA. Forms a bridge to the 30S subunit in the 70S ribosome.

In terms of biological role, this is one of the proteins that bind and probably mediate the attachment of the 5S RNA into the large ribosomal subunit, where it forms part of the central protuberance. In the 70S ribosome it contacts protein S13 of the 30S subunit (bridge B1b), connecting the 2 subunits; this bridge is implicated in subunit movement. Contacts the P site tRNA; the 5S rRNA and some of its associated proteins might help stabilize positioning of ribosome-bound tRNAs. This chain is Large ribosomal subunit protein uL5, found in Nitratidesulfovibrio vulgaris (strain ATCC 29579 / DSM 644 / CCUG 34227 / NCIMB 8303 / VKM B-1760 / Hildenborough) (Desulfovibrio vulgaris).